A 417-amino-acid chain; its full sequence is MSLEAIQFDRSHRDDISVRVLDQLLLPYTTKYVPIYTIDDGYTVINTMQVRGAPAIAIVGALAVLMEIQLLQNDGFARTQTFYDISSFELTRSALSQRLDFLLSSRPTAVNLSNALREIRVLLAQSAGLAAFGNGVYDFVCRLIDEDLTNNVKMGDNGAAFLLDALQQEGFDEDFAVLTICNTGSLATSGYGTALGVVRSLWNDSLAKSQAPGDGSAKKRKLNQGRAKMVQVYPLETRPYNQGARLTAYELVHDQIPATLIPDSSIAYRIATSPVPIKAAFVGADRIVRNGDTANKIGTYQLALVCKHFGIKFFVTAPKTTIDSKTETGAGIVVEERKPNEFKHVSGTLIDSQTGLPCVDNQDKPVSASVGVAPSEIDVWNPAFDITPHELIDGIVTEDGVFTKSASGSFDLTNLFA.

Asp285 acts as the Proton donor in catalysis.

Belongs to the eIF-2B alpha/beta/delta subunits family. MtnA subfamily.

Its subcellular location is the cytoplasm. The protein resides in the nucleus. It catalyses the reaction 5-(methylsulfanyl)-alpha-D-ribose 1-phosphate = 5-(methylsulfanyl)-D-ribulose 1-phosphate. It functions in the pathway amino-acid biosynthesis; L-methionine biosynthesis via salvage pathway; L-methionine from S-methyl-5-thio-alpha-D-ribose 1-phosphate: step 1/6. Functionally, catalyzes the interconversion of methylthioribose-1-phosphate (MTR-1-P) into methylthioribulose-1-phosphate (MTRu-1-P). This chain is Methylthioribose-1-phosphate isomerase, found in Lachancea thermotolerans (strain ATCC 56472 / CBS 6340 / NRRL Y-8284) (Yeast).